We begin with the raw amino-acid sequence, 553 residues long: Arginine--tRNA ligase (553 aa).

The short motif at 130–140 (ANPTGDLHIGH) is the 'HIGH' region element.

The protein belongs to the class-I aminoacyl-tRNA synthetase family. As to quaternary structure, monomer.

The protein resides in the cytoplasm. It carries out the reaction tRNA(Arg) + L-arginine + ATP = L-arginyl-tRNA(Arg) + AMP + diphosphate. This is Arginine--tRNA ligase from Staphylococcus aureus (strain MRSA252).